The sequence spans 879 residues: Phosphoenolpyruvate carboxylase (879 aa).

Residues His138 and Lys545 contribute to the active site.

Belongs to the PEPCase type 1 family. Mg(2+) is required as a cofactor.

It carries out the reaction oxaloacetate + phosphate = phosphoenolpyruvate + hydrogencarbonate. In terms of biological role, forms oxaloacetate, a four-carbon dicarboxylic acid source for the tricarboxylic acid cycle. The sequence is that of Phosphoenolpyruvate carboxylase (ppc) from Haemophilus influenzae (strain ATCC 51907 / DSM 11121 / KW20 / Rd).